Here is a 313-residue protein sequence, read N- to C-terminus: Formimidoylglutamase (313 aa).

Mn(2+) contacts are provided by histidine 130, aspartate 155, histidine 157, aspartate 159, aspartate 241, and aspartate 243.

This sequence belongs to the arginase family. It depends on Mn(2+) as a cofactor.

It catalyses the reaction N-formimidoyl-L-glutamate + H2O = formamide + L-glutamate. It functions in the pathway amino-acid degradation; L-histidine degradation into L-glutamate; L-glutamate from N-formimidoyl-L-glutamate (hydrolase route): step 1/1. In terms of biological role, catalyzes the conversion of N-formimidoyl-L-glutamate to L-glutamate and formamide. This chain is Formimidoylglutamase, found in Salmonella choleraesuis (strain SC-B67).